Consider the following 538-residue polypeptide: Mitochondria-eating protein (538 aa).

Positions methionine 1–arginine 273 are interaction with YWHAG/14-3-3 protein gamma. Position 85 is a phosphoserine (serine 85). The disordered stretch occupies residues glycine 92–glutamine 137. Residues phenylalanine 106–glutamine 122 are compositionally biased toward basic and acidic residues. Coiled coils occupy residues aspartate 118–arginine 186 and glutamine 220–arginine 256. A compositionally biased stretch (polar residues) spans glutamine 123–glutamine 137. Residues serine 156 and serine 159 each carry the phosphoserine modification. Disordered stretches follow at residues leucine 174 to serine 227 and lysine 247 to lysine 292. Basic and acidic residues-rich tracts occupy residues glutamate 181–glutamate 209 and arginine 216–serine 227. Over residues arginine 253–serine 278 the composition is skewed to low complexity. Residues serine 285, serine 287, and serine 509 each carry the phosphoserine modification.

It belongs to the MIEAP family. As to quaternary structure, interacts (via coiled-coil domains) with BNIP3L (via BH3 domain). Interacts (via coiled-coil domains) with BNIP3 (via BH3 domain). Interacts with YWHAG/14-3-3 protein gamma; a protein that also plays a role in MALM.

The protein resides in the cytoplasm. It is found in the cytosol. Its subcellular location is the mitochondrion outer membrane. The protein localises to the mitochondrion matrix. In terms of biological role, key regulator of mitochondrial quality that mediates the repairing or degradation of unhealthy mitochondria in response to mitochondrial damage. Mediator of mitochondrial protein catabolic process (also named MALM) by mediating the degradation of damaged proteins inside mitochondria by promoting the accumulation in the mitochondrial matrix of hydrolases that are characteristic of the lysosomal lumen. Also involved in mitochondrion degradation of damaged mitochondria by promoting the formation of vacuole-like structures (named MIV), which engulf and degrade unhealthy mitochondria by accumulating lysosomes. The physical interaction of SPATA18/MIEAP, BNIP3 and BNIP3L/NIX at the mitochondrial outer membrane regulates the opening of a pore in the mitochondrial double membrane in order to mediate the translocation of lysosomal proteins from the cytoplasm to the mitochondrial matrix. Binds cardiolipin. May form molecular condensates (non-membrane-bounded organelles) within mitochondria that compartmentalize and promote cardiolipin metabolism. The protein is Mitochondria-eating protein (SPATA18) of Macaca fascicularis (Crab-eating macaque).